A 193-amino-acid chain; its full sequence is Putative manganese efflux pump MntP (193 aa).

Transmembrane regions (helical) follow at residues 3–23 (IFAV…VAVV), 41–61 (AAFG…GVSV), 69–89 (DHWI…LSGL), 107–127 (AGRN…AVGL), 130–150 (AILG…CAVI), and 164–184 (LCAL…AIAC).

Belongs to the MntP (TC 9.B.29) family.

The protein resides in the cell inner membrane. Functionally, probably functions as a manganese efflux pump. The sequence is that of Putative manganese efflux pump MntP from Desulfovibrio desulfuricans (strain ATCC 27774 / DSM 6949 / MB).